The chain runs to 293 residues: MSIRTPMKLGIPKGSLEEATINLLARSGWKIRKHHRNYFPEINDPELTARLCRVQEIPRYIEDGILDVGLTGKDWLLETGSDVVVVSDLVYSKVSNRPARWVLAVAGDSPYTRPEDLAGKRVATELLGVTKRYFADAGIEVNVQYSWGATEAKVVEGLADAIVEVTETGTTIKAHGLRIISEVLLTNTVLIANRAAWEDPCRRRKIEQIDLLLQGALRADSLVGLKMNVPTRCLDAVLDQLPSLNSPTVAGLRDNTWFAVEIVVDNGVVRDLIPRLREAGAEGIIEYALNKVI.

The protein belongs to the ATP phosphoribosyltransferase family. Long subfamily. Mg(2+) is required as a cofactor.

The protein resides in the cytoplasm. The enzyme catalyses 1-(5-phospho-beta-D-ribosyl)-ATP + diphosphate = 5-phospho-alpha-D-ribose 1-diphosphate + ATP. It participates in amino-acid biosynthesis; L-histidine biosynthesis; L-histidine from 5-phospho-alpha-D-ribose 1-diphosphate: step 1/9. Its activity is regulated as follows. Feedback inhibited by histidine. Catalyzes the condensation of ATP and 5-phosphoribose 1-diphosphate to form N'-(5'-phosphoribosyl)-ATP (PR-ATP). Has a crucial role in the pathway because the rate of histidine biosynthesis seems to be controlled primarily by regulation of HisG enzymatic activity. This chain is ATP phosphoribosyltransferase, found in Nitratidesulfovibrio vulgaris (strain DP4) (Desulfovibrio vulgaris).